The sequence spans 283 residues: Pantothenate synthetase (283 aa).

An ATP-binding site is contributed by 30 to 37; sequence MGNLHDGH. Histidine 37 functions as the Proton donor in the catalytic mechanism. Glutamine 61 contributes to the (R)-pantoate binding site. Position 61 (glutamine 61) interacts with beta-alanine. 149–152 provides a ligand contact to ATP; the sequence is GEKD. A (R)-pantoate-binding site is contributed by glutamine 155. 186 to 189 contributes to the ATP binding site; sequence LSSR.

It belongs to the pantothenate synthetase family. Homodimer.

It is found in the cytoplasm. It catalyses the reaction (R)-pantoate + beta-alanine + ATP = (R)-pantothenate + AMP + diphosphate + H(+). Its pathway is cofactor biosynthesis; (R)-pantothenate biosynthesis; (R)-pantothenate from (R)-pantoate and beta-alanine: step 1/1. Catalyzes the condensation of pantoate with beta-alanine in an ATP-dependent reaction via a pantoyl-adenylate intermediate. The chain is Pantothenate synthetase from Escherichia coli O45:K1 (strain S88 / ExPEC).